Consider the following 188-residue polypeptide: Elongation factor P (188 aa).

At lysine 34 the chain carries N6-(3,6-diaminohexanoyl)-5-hydroxylysine.

The protein belongs to the elongation factor P family. In terms of processing, may be beta-lysylated on the epsilon-amino group of Lys-34 by the combined action of EpmA and EpmB, and then hydroxylated on the C5 position of the same residue by EpmC (if this protein is present). Lysylation is critical for the stimulatory effect of EF-P on peptide-bond formation. The lysylation moiety may extend toward the peptidyltransferase center and stabilize the terminal 3-CCA end of the tRNA. Hydroxylation of the C5 position on Lys-34 may allow additional potential stabilizing hydrogen-bond interactions with the P-tRNA.

The protein localises to the cytoplasm. It participates in protein biosynthesis; polypeptide chain elongation. Functionally, involved in peptide bond synthesis. Alleviates ribosome stalling that occurs when 3 or more consecutive Pro residues or the sequence PPG is present in a protein, possibly by augmenting the peptidyl transferase activity of the ribosome. Modification of Lys-34 is required for alleviation. This is Elongation factor P from Coxiella burnetii (strain CbuK_Q154) (Coxiella burnetii (strain Q154)).